The chain runs to 221 residues: Phosphoribosylformylglycinamidine synthase subunit PurQ (221 aa).

The 220-residue stretch at 2–221 (NVGVIVFPGS…FAGLLEPVAA (220 aa)) folds into the Glutamine amidotransferase type-1 domain. The active-site Nucleophile is the cysteine 86. Active-site residues include histidine 194 and glutamate 196.

In terms of assembly, part of the FGAM synthase complex composed of 1 PurL, 1 PurQ and 2 PurS subunits.

The protein localises to the cytoplasm. The catalysed reaction is N(2)-formyl-N(1)-(5-phospho-beta-D-ribosyl)glycinamide + L-glutamine + ATP + H2O = 2-formamido-N(1)-(5-O-phospho-beta-D-ribosyl)acetamidine + L-glutamate + ADP + phosphate + H(+). It carries out the reaction L-glutamine + H2O = L-glutamate + NH4(+). Its pathway is purine metabolism; IMP biosynthesis via de novo pathway; 5-amino-1-(5-phospho-D-ribosyl)imidazole from N(2)-formyl-N(1)-(5-phospho-D-ribosyl)glycinamide: step 1/2. Functionally, part of the phosphoribosylformylglycinamidine synthase complex involved in the purines biosynthetic pathway. Catalyzes the ATP-dependent conversion of formylglycinamide ribonucleotide (FGAR) and glutamine to yield formylglycinamidine ribonucleotide (FGAM) and glutamate. The FGAM synthase complex is composed of three subunits. PurQ produces an ammonia molecule by converting glutamine to glutamate. PurL transfers the ammonia molecule to FGAR to form FGAM in an ATP-dependent manner. PurS interacts with PurQ and PurL and is thought to assist in the transfer of the ammonia molecule from PurQ to PurL. The chain is Phosphoribosylformylglycinamidine synthase subunit PurQ from Synechococcus sp. (strain ATCC 27144 / PCC 6301 / SAUG 1402/1) (Anacystis nidulans).